The chain runs to 430 residues: Probable sulfoacetate transporter SauU (430 aa).

A run of 10 helical transmembrane segments spans residues 47–67, 83–103, 142–162, 165–185, 228–248, 263–283, 301–321, 327–347, 362–382, and 390–410; these read LGLV…LGGW, LIWG…ILVV, FARL…AAAG, EAFI…AFFF, WLVT…LTWL, LALF…LGGV, AVLF…TFTA, VILL…LWSL, MMNT…GYLI, and LPFM…LFIN.

It belongs to the major facilitator superfamily.

The protein resides in the cell membrane. Its function is as follows. May transport sulfoacetate into the cell. This Cupriavidus necator (strain ATCC 17699 / DSM 428 / KCTC 22496 / NCIMB 10442 / H16 / Stanier 337) (Ralstonia eutropha) protein is Probable sulfoacetate transporter SauU (sauU).